We begin with the raw amino-acid sequence, 986 residues long: Translation initiation factor IF-2 (986 aa).

The segment covering 49–59 (EFAKDNAKGDS) has biased composition (basic and acidic residues). Residues 49-370 (EFAKDNAKGD…KNRLAKRHEY (322 aa)) form a disordered region. Low complexity predominate over residues 60–112 (KPASSAQKPAAKPVQQRRPAAPSAPASTSSSAPTPAAPARQASPASAHQQAPT). Positions 135 to 168 (GQHDNRENGRDNREGRENGRQSRPNDRRNNDRRN) are enriched in basic and acidic residues. The segment covering 170–182 (QGRPNNGQPGQHQ) has biased composition (low complexity). Composition is skewed to gly residues over residues 254–286 (GRGGRPGRPGQGQGQGRGFRGGRPGQGGQGGPR) and 296–353 (GQGG…GRQG). Residues 357–366 (SKARKNRLAK) show a composition bias toward basic residues. One can recognise a tr-type G domain in the interval 479–651 (PRPPVVTVMG…VLLTADAELD (173 aa)). The interval 488 to 495 (GHVDHGKT) is G1. 488–495 (GHVDHGKT) lines the GTP pocket. The segment at 513–517 (GITQR) is G2. The G3 stretch occupies residues 538 to 541 (DTPG). GTP is bound by residues 538–542 (DTPGH) and 592–595 (NKID). The segment at 592–595 (NKID) is G4. The G5 stretch occupies residues 628–630 (SAK).

Belongs to the TRAFAC class translation factor GTPase superfamily. Classic translation factor GTPase family. IF-2 subfamily.

Its subcellular location is the cytoplasm. One of the essential components for the initiation of protein synthesis. Protects formylmethionyl-tRNA from spontaneous hydrolysis and promotes its binding to the 30S ribosomal subunits. Also involved in the hydrolysis of GTP during the formation of the 70S ribosomal complex. The protein is Translation initiation factor IF-2 of Bifidobacterium longum subsp. infantis (strain ATCC 15697 / DSM 20088 / JCM 1222 / NCTC 11817 / S12).